The following is an 801-amino-acid chain: Na(+)/H(+) antiporter subunit A1 (801 aa).

The next 21 membrane-spanning stretches (helical) occupy residues Leu-4–Phe-25, Leu-30–Ile-49, Leu-79–Tyr-101, Leu-108–Leu-127, Val-131–Arg-153, Leu-166–Gln-188, Phe-208–Ile-230, Ser-243–Ile-265, Gln-270–Leu-289, Ala-302–His-324, Ala-339–Val-361, Leu-373–Ala-395, Tyr-429–Met-451, Ile-472–Ile-494, Ala-526–Val-548, Asn-589–Phe-611, Ile-621–Phe-641, Leu-646–Ala-668, Ala-672–Pro-694, Leu-707–Gly-729, and Leu-767–Ile-784.

It belongs to the CPA3 antiporters (TC 2.A.63) subunit A family. As to quaternary structure, may form a heterooligomeric complex that consists of seven subunits: mnhA1, mnhB1, mnhC1, mnhD1, mnhE1, mnhF1 and mnhG1.

The protein resides in the cell membrane. Its activity is regulated as follows. Na(+) extrusion is completely inhibited by the H(+) conductor carbonyl cyanide m-chlorophenylhydrazone (CCCP). Functionally, mnh complex is a Na(+)/H(+) antiporter involved in Na(+) excretion. The sequence is that of Na(+)/H(+) antiporter subunit A1 (mnhA1) from Staphylococcus aureus (strain MRSA252).